The chain runs to 374 residues: Cell division protein C (374 aa).

The MIT domain maps to 11–73 (ARKYAINAVK…YKRRIEVLKE (63 aa)). 144 to 151 (GPPGCGKT) provides a ligand contact to ATP.

Belongs to the AAA ATPase family. As to quaternary structure, interacts with CdvB.

The protein localises to the cytoplasm. It is found in the nucleoid. In terms of biological role, part of a cell division machinery. The CdvA, CdvB and CdvC proteins polymerize between segregating nucleoids and persist throughout cell division, forming a successively smaller structure during constriction. The protein is Cell division protein C of Sulfolobus acidocaldarius (strain ATCC 33909 / DSM 639 / JCM 8929 / NBRC 15157 / NCIMB 11770).